We begin with the raw amino-acid sequence, 363 residues long: G-protein coupled receptor 6 (363 aa).

Over 1 to 75 (MNASAAALNE…SGLLLSAVNP (75 aa)) the chain is Extracellular. 2 N-linked (GlcNAc...) asparagine glycosylation sites follow: asparagine 2 and asparagine 9. The interval 28–51 (AGTPDTSEWGPPAASAALGGGGGP) is disordered. An N-linked (GlcNAc...) asparagine glycan is attached at asparagine 52. A helical transmembrane segment spans residues 76 to 95 (WDVLLCVSGTVIAGENALVV). Over 96 to 107 (ALIASTPALRTP) the chain is Cytoplasmic. A helical transmembrane segment spans residues 108-131 (MFVLVGSLATADLLAGCGLILHFV). The Extracellular portion of the chain corresponds to 132–143 (FQYVVPSETVSL). The chain crosses the membrane as a helical span at residues 144 to 165 (LMVGFLVASFAASVSSLLAITV). At 166–186 (DRYLSLYNALTYYSRRTLLGV) the chain is on the cytoplasmic side. Residues 187–206 (HLLLAATWTVSLGLGLLPVL) form a helical membrane-spanning segment. Residues 207–231 (GWNCLADRASCSVVRPLTRSHVALL) lie on the Extracellular side of the membrane. The helical transmembrane segment at 232–250 (STSFFVVFGIMLHLYVRIC) threads the bilayer. At 251–278 (QVVWRHAHQIALQQHCLAPPHLAATRKG) the chain is on the cytoplasmic side. The chain crosses the membrane as a helical span at residues 279-305 (VGTLAVVLGTFGASWLPFAIYCVVGSQ). The Extracellular segment spans residues 306–310 (EDPAI). The helical transmembrane segment at 311–332 (YTYATLLPATYNSMINPIIYAF) threads the bilayer. At 333 to 363 (RNQEIQRALWLLFCGCFQSKVPFRSRSPSEV) the chain is on the cytoplasmic side. Residue cysteine 346 is the site of S-palmitoyl cysteine attachment. Phosphoserine occurs at positions 357, 359, and 361.

This sequence belongs to the G-protein coupled receptor 1 family. Expressed in the brain, with a prominent distribution in striatum.

The protein localises to the cell membrane. Functionally, orphan receptor with constitutive G(s) signaling activity that activate cyclic AMP. Promotes neurite outgrowth and blocks myelin inhibition in neurons. This Rattus norvegicus (Rat) protein is G-protein coupled receptor 6 (Gpr6).